The primary structure comprises 224 residues: Ribonuclease T (224 aa).

An Exonuclease domain is found at Val-20–Phe-194. Asp-23, Glu-25, His-181, and Asp-186 together coordinate Mg(2+). Residue His-181 is the Proton donor/acceptor of the active site.

Belongs to the RNase T family. Homodimer. It depends on Mg(2+) as a cofactor.

Trims short 3' overhangs of a variety of RNA species, leaving a one or two nucleotide 3' overhang. Responsible for the end-turnover of tRNA: specifically removes the terminal AMP residue from uncharged tRNA (tRNA-C-C-A). Also appears to be involved in tRNA biosynthesis. This chain is Ribonuclease T, found in Enterobacter sp. (strain 638).